Consider the following 356-residue polypeptide: Methionine import ATP-binding protein MetN (356 aa).

Positions 7 to 250 (IKLDNIDVTF…PRESLTQDFI (244 aa)) constitute an ABC transporter domain. 43-50 (GYSGAGKS) contributes to the ATP binding site.

It belongs to the ABC transporter superfamily. Methionine importer (TC 3.A.1.24) family. In terms of assembly, the complex is composed of two ATP-binding proteins (MetN), two transmembrane proteins (MetI) and a solute-binding protein (MetQ).

It is found in the cell membrane. The catalysed reaction is L-methionine(out) + ATP + H2O = L-methionine(in) + ADP + phosphate + H(+). It catalyses the reaction D-methionine(out) + ATP + H2O = D-methionine(in) + ADP + phosphate + H(+). In terms of biological role, part of the ABC transporter complex MetNIQ involved in methionine import. Responsible for energy coupling to the transport system. The protein is Methionine import ATP-binding protein MetN of Streptococcus agalactiae serotype Ia (strain ATCC 27591 / A909 / CDC SS700).